The following is a 446-amino-acid chain: tRNA-2-methylthio-N(6)-dimethylallyladenosine synthase (446 aa).

Positions 3 to 120 (KKLFIETHGC…LPEMIDAARS (118 aa)) constitute an MTTase N-terminal domain. [4Fe-4S] cluster-binding residues include cysteine 12, cysteine 49, cysteine 83, cysteine 157, cysteine 161, and cysteine 164. Residues 143 to 375 (RVDGPTAFVS…QGRIHQQGYE (233 aa)) enclose the Radical SAM core domain. Residues 378–442 (RRMVGSTQRI…PHSLRGTLIE (65 aa)) enclose the TRAM domain.

Belongs to the methylthiotransferase family. MiaB subfamily. In terms of assembly, monomer. [4Fe-4S] cluster serves as cofactor.

The protein resides in the cytoplasm. It carries out the reaction N(6)-dimethylallyladenosine(37) in tRNA + (sulfur carrier)-SH + AH2 + 2 S-adenosyl-L-methionine = 2-methylsulfanyl-N(6)-dimethylallyladenosine(37) in tRNA + (sulfur carrier)-H + 5'-deoxyadenosine + L-methionine + A + S-adenosyl-L-homocysteine + 2 H(+). In terms of biological role, catalyzes the methylthiolation of N6-(dimethylallyl)adenosine (i(6)A), leading to the formation of 2-methylthio-N6-(dimethylallyl)adenosine (ms(2)i(6)A) at position 37 in tRNAs that read codons beginning with uridine. The polypeptide is tRNA-2-methylthio-N(6)-dimethylallyladenosine synthase (Pseudomonas paraeruginosa (strain DSM 24068 / PA7) (Pseudomonas aeruginosa (strain PA7))).